A 124-amino-acid polypeptide reads, in one-letter code: Alpha-endosulfine (124 aa).

Position 74 is a phosphoserine; by GWL (S74). The tract at residues 99–124 (VTGDHIPTPQDLPQRKNTILTSKLAG) is disordered. Polar residues predominate over residues 113 to 124 (RKNTILTSKLAG).

The protein belongs to the endosulfine family. In terms of processing, phosphorylation at Ser-74 by gwl during mitosis is essential for interaction with ppp2r2d (PR55-delta) and subsequent inactivation of PP2A.

It is found in the cytoplasm. Functionally, protein phosphatase inhibitor that specifically inhibits protein phosphatase 2A (PP2A) during mitosis. When phosphorylated at Ser-67 during mitosis, specifically interacts with ppp2r2d (PR55-delta) and inhibits its activity, leading to inactivation of PP2A, an essential condition to keep cyclin-B1-CDK1 activity high during M phase. The protein is Alpha-endosulfine (ensa) of Danio rerio (Zebrafish).